A 191-amino-acid polypeptide reads, in one-letter code: dTTP/UTP pyrophosphatase (191 aa).

The Proton acceptor role is filled by Asp65.

Belongs to the Maf family. YhdE subfamily. Requires a divalent metal cation as cofactor.

The protein localises to the cytoplasm. The catalysed reaction is dTTP + H2O = dTMP + diphosphate + H(+). The enzyme catalyses UTP + H2O = UMP + diphosphate + H(+). Nucleoside triphosphate pyrophosphatase that hydrolyzes dTTP and UTP. May have a dual role in cell division arrest and in preventing the incorporation of modified nucleotides into cellular nucleic acids. The protein is dTTP/UTP pyrophosphatase of Leptospira biflexa serovar Patoc (strain Patoc 1 / Ames).